The sequence spans 138 residues: MRALWIVAVCLIGVEGSMIEFGKMIQEETEKNPITSYSLYGCHCGLGSKGKPKDATDRCCFVHSCCYAKLSDCSPKTNRYEYHRENGTIVCGSSTFCKKQICECDRAAAICFRENLKTYNKKYKVYLRFKCKGVPEKC.

A signal peptide spans 1-16; that stretch reads MRALWIVAVCLIGVEG. 7 disulfide bridges follow: Cys42–Cys131, Cys44–Cys60, Cys59–Cys111, Cys65–Cys138, Cys66–Cys104, Cys73–Cys97, and Cys91–Cys102. The interval 121 to 133 is important for membrane-damaging activities in eukaryotes and bacteria; heparin-binding; the sequence is KKYKVYLRFKCKG.

The protein belongs to the phospholipase A2 family. Group II subfamily. S49 sub-subfamily. As to expression, expressed by the venom gland.

Its subcellular location is the secreted. Its function is as follows. Snake venom phospholipase A2 homolog that lacks enzymatic activity. Is able to suppress the acetylcholine (ACh)-evoked current mediated by alpha-7 (CHRNA7)-similar nAChRs in L.stagnalis neurons (IC(50)=2.18 uM). This activity is only partially reversible and seems to be non-competitive. The chain is Basic phospholipase A2 homolog Vur-S49 from Vipera renardi (Steppe viper).